Reading from the N-terminus, the 262-residue chain is Acyl-coenzyme A diphosphatase FITM2 (262 aa).

Topologically, residues 1–23 are cytoplasmic; sequence MEHLERCEWLLRGTLVRAAVRRY. The chain crosses the membrane as a helical span at residues 24–44; the sequence is LPWALVASMLAGSLLKELSPL. Residues 45-57 lie on the Lumenal side of the membrane; it reads PESYLSNKRNVLN. A helical membrane pass occupies residues 58–78; sequence VYFVKVAWAWTFCLLLPFIAL. Residues 79 to 93 lie on the Cytoplasmic side of the membrane; sequence TNYHLTGKAGLVLRR. A helical transmembrane segment spans residues 94–114; sequence LSTLLVGTAIWYICTSIFSNI. Topologically, residues 115 to 145 are lumenal; sequence EHYTGSCYQSPALEGVRKEHQSKQQCHQEGG. Residues 146 to 166 form a helical membrane-spanning segment; it reads FWHGFDISGHSFLLTFCALMI. H155 is an active-site residue. Over 167-190 the chain is Cytoplasmic; that stretch reads VEEMSVLHEVKTDRSHCLHTAITT. The helical transmembrane segment at 191-211 threads the bilayer; sequence LVVALGILTFIWVLMFLCTAV. Topologically, residues 212–218 are lumenal; the sequence is YFHNLSQ. The active site involves H214. Residues 219 to 239 form a helical membrane-spanning segment; that stretch reads KVFGTLFGLLSWYGTYGFWYP. The Cytoplasmic segment spans residues 240-262; that stretch reads KAFSPGLPPQSCSLNLKQDSYKK.

It belongs to the FIT family. FIT2 subfamily. In terms of tissue distribution, widely expressed.

Its subcellular location is the endoplasmic reticulum membrane. The catalysed reaction is an acyl-CoA + H2O = an acyl-4'-phosphopantetheine + adenosine 3',5'-bisphosphate + 2 H(+). It carries out the reaction (9Z)-octadecenoyl-CoA + H2O = S-(9Z-octadecenoyl)-4'-phosphopantetheine + adenosine 3',5'-bisphosphate + 2 H(+). It catalyses the reaction (5Z,8Z,11Z,14Z)-eicosatetraenoyl-CoA + H2O = S-(5Z,8Z,11Z,14Z-eicosatetraenoyl)-4'-phosphopantetheine + adenosine 3',5'-bisphosphate + 2 H(+). The enzyme catalyses hexadecanoyl-CoA + H2O = S-hexadecanoyl-4'-phosphopantetheine + adenosine 3',5'-bisphosphate + 2 H(+). Functionally, fatty acyl-coenzyme A (CoA) diphosphatase that hydrolyzes fatty acyl-CoA to yield acyl-4'-phosphopantetheine and adenosine 3',5'-bisphosphate. Preferentially hydrolyzes unsaturated long-chain acyl-CoA substrates such as oleoyl-CoA/(9Z)-octadecenoyl-CoA and arachidonoyl-CoA/(5Z,8Z,11Z,14Z)-eicosatetraenoyl-CoA in the endoplasmic reticulum (ER) lumen. This catalytic activity is required for maintaining ER structure and for lipid droplets (LDs) biogenesis, which are lipid storage organelles involved in maintaining lipid and energy homeostasis. Directly binds to diacylglycerol (DAGs) and triacylglycerol, which is also important for LD biogenesis. May support directional budding of nacent LDs from the ER into the cytosol by reducing DAG levels at sites of LD formation. Plays a role in the regulation of cell morphology and cytoskeletal organization. The sequence is that of Acyl-coenzyme A diphosphatase FITM2 from Homo sapiens (Human).